The chain runs to 85 residues: SKP1-like protein 6 (85 aa).

The interaction with the F-box domain of F-box proteins stretch occupies residues Met65–Arg85.

It belongs to the SKP1 family. As to quaternary structure, part of a SCF (SKP1-cullin-F-box) protein ligase complex.

The protein localises to the nucleus. It participates in protein modification; protein ubiquitination. In terms of biological role, involved in ubiquitination and subsequent proteasomal degradation of target proteins. Together with CUL1, RBX1 and a F-box protein, it forms a SCF E3 ubiquitin ligase complex. The functional specificity of this complex depends on the type of F-box protein. In the SCF complex, it serves as an adapter that links the F-box protein to CUL1. This chain is SKP1-like protein 6 (ASK6), found in Arabidopsis thaliana (Mouse-ear cress).